The following is a 34-amino-acid chain: U4-theraphotoxin-Hs1a (34 aa).

Intrachain disulfides connect Cys-3–Cys-17, Cys-10–Cys-22, and Cys-16–Cys-33.

It belongs to the neurotoxin 14 (magi-1) family. 05 (ICK-7) subfamily. As to expression, expressed by the venom gland.

It is found in the secreted. Functionally, intracisternal injection paralyzes mice. The chain is U4-theraphotoxin-Hs1a from Cyriopagopus schmidti (Chinese bird spider).